Reading from the N-terminus, the 405-residue chain is 26S proteasome regulatory subunit 8 homolog (405 aa).

The residue at position 2 (Thr2) is an N-acetylthreonine. Residue 189–196 (GPPGTGKT) coordinates ATP.

This sequence belongs to the AAA ATPase family. May form a homodimer or a heterodimer with a related family member. Interacts with OLA1, TMA17, and UBR1. Post-translationally, N-acetylated by NAT1.

The protein resides in the cytoplasm. The protein localises to the nucleus. The 26S proteasome is involved in the ATP-dependent degradation of ubiquitinated proteins. The regulatory (or ATPase) complex confers ATP dependency and substrate specificity to the 26S complex. The protein is 26S proteasome regulatory subunit 8 homolog (RPT6) of Saccharomyces cerevisiae (strain ATCC 204508 / S288c) (Baker's yeast).